Here is a 529-residue protein sequence, read N- to C-terminus: Heat shock protein 60 (529 aa).

Residues 460–484 (YQATVQHPPPQSSYEEDGRRPPTQP) form a disordered region.

This chain is Heat shock protein 60, found in Giardia intestinalis (Giardia lamblia).